Here is a 161-residue protein sequence, read N- to C-terminus: Probable K(+)/H(+) antiporter subunit E (161 aa).

The next 2 membrane-spanning stretches (helical) occupy residues Trp-4–Leu-21 and Gly-28–Ala-50.

The protein belongs to the CPA3 antiporters (TC 2.A.63) subunit E family. May form a hetero-oligomeric complex that consists of six subunits: PhaAB, PhaC, PhaD, PhaE, PhaF and PhaG.

The protein resides in the cell membrane. Its function is as follows. Part of a K(+) efflux system which is required for the adaptation of R.meliloti to alkaline pH as well as for the infection process during symbiotic nodule development. The polypeptide is Probable K(+)/H(+) antiporter subunit E (phaE) (Rhizobium meliloti (strain 1021) (Ensifer meliloti)).